We begin with the raw amino-acid sequence, 191 residues long: Protein GrpE (191 aa).

Residues 1-11 (MTDSSNAHEAE) are compositionally biased toward basic and acidic residues. Disordered regions lie at residues 1–22 (MTDS…DNEI) and 172–191 (KVSK…NNNE).

This sequence belongs to the GrpE family. Homodimer.

The protein localises to the cytoplasm. Participates actively in the response to hyperosmotic and heat shock by preventing the aggregation of stress-denatured proteins, in association with DnaK and GrpE. It is the nucleotide exchange factor for DnaK and may function as a thermosensor. Unfolded proteins bind initially to DnaJ; upon interaction with the DnaJ-bound protein, DnaK hydrolyzes its bound ATP, resulting in the formation of a stable complex. GrpE releases ADP from DnaK; ATP binding to DnaK triggers the release of the substrate protein, thus completing the reaction cycle. Several rounds of ATP-dependent interactions between DnaJ, DnaK and GrpE are required for fully efficient folding. The sequence is that of Protein GrpE from Chlamydia abortus (strain DSM 27085 / S26/3) (Chlamydophila abortus).